A 454-amino-acid chain; its full sequence is Type II methyltransferase M.MvaI (454 aa).

The protein belongs to the N(4)/N(6)-methyltransferase family. N(4) subfamily.

It catalyses the reaction a 2'-deoxycytidine in DNA + S-adenosyl-L-methionine = an N(4)-methyl-2'-deoxycytidine in DNA + S-adenosyl-L-homocysteine + H(+). An alpha subtype methylase, recognizes the double-stranded sequence 5'-CCWGG-3', methylatES C-2 on both strands, and protects the DNA from cleavage by the MvaI endonuclease. This Kocuria varians (Micrococcus varians) protein is Type II methyltransferase M.MvaI.